The primary structure comprises 502 residues: ATP synthase subunit alpha (502 aa).

Gly-169–Thr-176 lines the ATP pocket.

The protein belongs to the ATPase alpha/beta chains family. In terms of assembly, F-type ATPases have 2 components, CF(1) - the catalytic core - and CF(0) - the membrane proton channel. CF(1) has five subunits: alpha(3), beta(3), gamma(1), delta(1), epsilon(1). CF(0) has three main subunits: a(1), b(2) and c(9-12). The alpha and beta chains form an alternating ring which encloses part of the gamma chain. CF(1) is attached to CF(0) by a central stalk formed by the gamma and epsilon chains, while a peripheral stalk is formed by the delta and b chains. The F(1)F(0) complex interacts with SpoIIIJ and YqjG; YqgA is found in the same complex.

It localises to the cell membrane. It is found in the membrane raft. The enzyme catalyses ATP + H2O + 4 H(+)(in) = ADP + phosphate + 5 H(+)(out). In terms of biological role, produces ATP from ADP in the presence of a proton gradient across the membrane. The alpha chain is a regulatory subunit. The chain is ATP synthase subunit alpha from Bacillus subtilis (strain 168).